The chain runs to 147 residues: Vasopressin-neurophysin 2-copeptin (147 aa).

Cysteine 1 and cysteine 6 are oxidised to a cystine. Glycine amide is present on glycine 9. Intrachain disulfides connect cysteine 22–cysteine 66, cysteine 25–cysteine 39, cysteine 33–cysteine 56, cysteine 40–cysteine 46, cysteine 73–cysteine 85, cysteine 79–cysteine 97, and cysteine 86–cysteine 91. Residue asparagine 114 is glycosylated (N-linked (GlcNAc...) asparagine).

It belongs to the vasopressin/oxytocin family. Interacts with vasopressin receptors V1bR/AVPR1B (Ki=85 pM), V1aR/AVPR1A (Ki=0.6 nM) and V2R/AVPR2 (Ki=4.9 nM). Interacts with oxytocin receptor (OXTR) (Ki=110 nM).

The protein localises to the secreted. Functionally, neurophysin 2 specifically binds vasopressin. Vasopressin has a direct antidiuretic action on the kidney, it also causes vasoconstriction of the peripheral vessels. Acts by binding to vasopressin receptors (V1bR/AVPR1B, V1aR/AVPR1A, and V2R/AVPR2). This Ovis aries (Sheep) protein is Vasopressin-neurophysin 2-copeptin (AVP).